Here is an 82-residue protein sequence, read N- to C-terminus: Putative antitoxin Saci_0468 (82 aa).

Belongs to the UPF0330 family.

Its function is as follows. Possibly the antitoxin component of a type II toxin-antitoxin (TA) system. This chain is Putative antitoxin Saci_0468, found in Sulfolobus acidocaldarius (strain ATCC 33909 / DSM 639 / JCM 8929 / NBRC 15157 / NCIMB 11770).